The primary structure comprises 517 residues: Methionine aminopeptidase 1b (517 aa).

The interval 74–94 is disordered; the sequence is YCNKENSNNNNNNNNNNNNNL. The segment covering 79-94 has biased composition (low complexity); sequence NSNNNNNNNNNNNNNL. The segment at 114-166 adopts a C6H2-type zinc-finger fold; sequence ENLCSGCKKVLIKKLSCPICLKNKIFSYFCNQECFKGSWKEHQKIHENMNKEN. 8 residues coordinate Zn(2+): Cys117, Cys120, Cys130, Cys133, Cys143, Cys147, His155, and His159. A protein is bound at residue His325. Positions 342, 353, and 419 each coordinate Zn(2+). An a protein-binding site is contributed by His426. Zn(2+) contacts are provided by Glu452 and Glu483.

The protein belongs to the peptidase M24A family. Methionine aminopeptidase type 1 subfamily. Associates with the 60S ribosomal subunit of the 80S translational complex. Zn(2+) is required as a cofactor. It depends on Co(2+) as a cofactor. The cofactor is Mn(2+). Requires Fe(2+) as cofactor.

Its subcellular location is the cytoplasm. It catalyses the reaction Release of N-terminal amino acids, preferentially methionine, from peptides and arylamides.. Its activity is regulated as follows. Inhibited by pyrimidine derivative XC11. Its function is as follows. Cotranslationally removes the N-terminal methionine from nascent proteins. The N-terminal methionine is often cleaved when the second residue in the primary sequence is small and uncharged (Met-Ala-, Cys, Gly, Pro, Ser, Thr, or Val). May play an important role in parasite growth during the blood asexual stage. This chain is Methionine aminopeptidase 1b, found in Plasmodium falciparum (isolate 3D7).